A 310-amino-acid polypeptide reads, in one-letter code: Tyrosine recombinase XerC (310 aa).

Residues asparagine 11–isoleucine 97 enclose the Core-binding (CB) domain. One can recognise a Tyr recombinase domain in the interval proline 118–aspartate 298. Residues arginine 157, lysine 181, histidine 250, arginine 253, and histidine 276 contribute to the active site. The O-(3'-phospho-DNA)-tyrosine intermediate role is filled by tyrosine 285.

This sequence belongs to the 'phage' integrase family. XerC subfamily. Forms a cyclic heterotetrameric complex composed of two molecules of XerC and two molecules of XerD.

It is found in the cytoplasm. Functionally, site-specific tyrosine recombinase, which acts by catalyzing the cutting and rejoining of the recombining DNA molecules. The XerC-XerD complex is essential to convert dimers of the bacterial chromosome into monomers to permit their segregation at cell division. It also contributes to the segregational stability of plasmids. This Vibrio parahaemolyticus serotype O3:K6 (strain RIMD 2210633) protein is Tyrosine recombinase XerC.